Reading from the N-terminus, the 137-residue chain is Large ribosomal subunit protein uL16 (137 aa).

The protein belongs to the universal ribosomal protein uL16 family. Part of the 50S ribosomal subunit.

Binds 23S rRNA and is also seen to make contacts with the A and possibly P site tRNAs. The sequence is that of Large ribosomal subunit protein uL16 from Methylobacterium sp. (strain 4-46).